The following is a 114-amino-acid chain: Ribonuclease P protein component (114 aa).

This sequence belongs to the RnpA family. In terms of assembly, consists of a catalytic RNA component (M1 or rnpB) and a protein subunit.

The catalysed reaction is Endonucleolytic cleavage of RNA, removing 5'-extranucleotides from tRNA precursor.. In terms of biological role, RNaseP catalyzes the removal of the 5'-leader sequence from pre-tRNA to produce the mature 5'-terminus. It can also cleave other RNA substrates such as 4.5S RNA. The protein component plays an auxiliary but essential role in vivo by binding to the 5'-leader sequence and broadening the substrate specificity of the ribozyme. This chain is Ribonuclease P protein component, found in Clostridioides difficile (strain 630) (Peptoclostridium difficile).